A 482-amino-acid polypeptide reads, in one-letter code: 2-succinylbenzoate--CoA ligase (482 aa).

Belongs to the ATP-dependent AMP-binding enzyme family. MenE subfamily.

It carries out the reaction 2-succinylbenzoate + ATP + CoA = 2-succinylbenzoyl-CoA + AMP + diphosphate. It participates in quinol/quinone metabolism; 1,4-dihydroxy-2-naphthoate biosynthesis; 1,4-dihydroxy-2-naphthoate from chorismate: step 5/7. The protein operates within quinol/quinone metabolism; menaquinone biosynthesis. Its function is as follows. Converts 2-succinylbenzoate (OSB) to 2-succinylbenzoyl-CoA (OSB-CoA). The chain is 2-succinylbenzoate--CoA ligase from Bacillus cereus (strain ZK / E33L).